A 132-amino-acid chain; its full sequence is Small ribosomal subunit protein uS8c (132 aa).

This sequence belongs to the universal ribosomal protein uS8 family. Part of the 30S ribosomal subunit.

Its subcellular location is the plastid. The protein resides in the chloroplast. Its function is as follows. One of the primary rRNA binding proteins, it binds directly to 16S rRNA central domain where it helps coordinate assembly of the platform of the 30S subunit. This is Small ribosomal subunit protein uS8c (rps8) from Calycanthus floridus var. glaucus (Eastern sweetshrub).